The sequence spans 94 residues: MAVLSNDQVDAALPNLPGWERAAGALRRSVKFPTFLDGIDAVRRVAEFAEEKDHHPDIDIRWRTVTFALVTHAAGGITEKDVQMAEEINRILSD.

This sequence belongs to the pterin-4-alpha-carbinolamine dehydratase family.

It catalyses the reaction (4aS,6R)-4a-hydroxy-L-erythro-5,6,7,8-tetrahydrobiopterin = (6R)-L-erythro-6,7-dihydrobiopterin + H2O. This is Putative pterin-4-alpha-carbinolamine dehydratase from Mycolicibacterium smegmatis (strain ATCC 700084 / mc(2)155) (Mycobacterium smegmatis).